The following is a 336-amino-acid chain: Dihydroorotate dehydrogenase (quinone) (336 aa).

FMN is bound by residues alanine 62–lysine 66 and threonine 86. Substrate is bound at residue lysine 66. Asparagine 111–phenylalanine 115 is a binding site for substrate. FMN is bound by residues asparagine 139 and asparagine 172. Asparagine 172 lines the substrate pocket. Residue serine 175 is the Nucleophile of the active site. Residue asparagine 177 coordinates substrate. The FMN site is built by lysine 217 and threonine 245. Residue asparagine 246–threonine 247 coordinates substrate. FMN is bound by residues glycine 268, glycine 297, and tyrosine 318 to serine 319.

It belongs to the dihydroorotate dehydrogenase family. Type 2 subfamily. Monomer. It depends on FMN as a cofactor.

It is found in the cell membrane. It catalyses the reaction (S)-dihydroorotate + a quinone = orotate + a quinol. Its pathway is pyrimidine metabolism; UMP biosynthesis via de novo pathway; orotate from (S)-dihydroorotate (quinone route): step 1/1. In terms of biological role, catalyzes the conversion of dihydroorotate to orotate with quinone as electron acceptor. The polypeptide is Dihydroorotate dehydrogenase (quinone) (Aliivibrio fischeri (strain ATCC 700601 / ES114) (Vibrio fischeri)).